We begin with the raw amino-acid sequence, 500 residues long: Glycerol kinase (500 aa).

Residue threonine 13 coordinates ADP. ATP is bound by residues threonine 13, threonine 14, and serine 15. Residue threonine 13 participates in sn-glycerol 3-phosphate binding. Residue arginine 17 participates in ADP binding. 4 residues coordinate sn-glycerol 3-phosphate: arginine 83, glutamate 84, tyrosine 135, and aspartate 245. Glycerol-binding residues include arginine 83, glutamate 84, tyrosine 135, aspartate 245, and glutamine 246. Residues threonine 267 and glycine 310 each contribute to the ADP site. ATP contacts are provided by threonine 267, glycine 310, glutamine 314, and glycine 411. ADP-binding residues include glycine 411 and asparagine 415.

The protein belongs to the FGGY kinase family. As to quaternary structure, homotetramer and homodimer (in equilibrium).

The enzyme catalyses glycerol + ATP = sn-glycerol 3-phosphate + ADP + H(+). The protein operates within polyol metabolism; glycerol degradation via glycerol kinase pathway; sn-glycerol 3-phosphate from glycerol: step 1/1. Its activity is regulated as follows. Activated by phosphorylation and inhibited by fructose 1,6-bisphosphate (FBP). Functionally, key enzyme in the regulation of glycerol uptake and metabolism. Catalyzes the phosphorylation of glycerol to yield sn-glycerol 3-phosphate. The polypeptide is Glycerol kinase (Carboxydothermus hydrogenoformans (strain ATCC BAA-161 / DSM 6008 / Z-2901)).